The sequence spans 379 residues: Armadillo repeat-containing X-linked protein 3 (379 aa).

Over Met-1 to Lys-6 the chain is Mitochondrial intermembrane. Mitochondrion outer membrane (MOM)-targeting sequence stretches follow at residues Met-1–Lys-6 and Arg-26–Lys-37. A helical; Signal-anchor membrane pass occupies residues Val-7 to Arg-29. Over Gly-30 to Glu-379 the chain is Cytoplasmic. Ser-61, Ser-67, and Ser-72 each carry phosphoserine. Residues Arg-89–Ala-98 are nuclear localization signal. Residues Arg-95–Gln-106 are compositionally biased toward basic residues. Positions Arg-95–Thr-116 are disordered. At Ser-110 the chain carries Phosphoserine. ARM repeat units follow at residues Pro-111–Ala-151, Ala-153–Val-192, and Val-233–Glu-272.

It belongs to the eutherian X-chromosome-specific Armcx family. As to quaternary structure, interacts (via ARM domain) with MIRO1, MIRO2 and TRAK2. The interaction with Miro is calcium-dependent. Interacts with SOX10.

It localises to the mitochondrion outer membrane. The protein localises to the cytoplasm. Its subcellular location is the nucleus. Functionally, regulates mitochondrial aggregation and transport in axons in living neurons. May link mitochondria to the TRAK2-kinesin motor complex via its interaction with Miro and TRAK2. Mitochondrial distribution and dynamics is regulated through ARMCX3 protein degradation, which is promoted by PCK and negatively regulated by WNT1. Enhances the SOX10-mediated transactivation of the neuronal acetylcholine receptor subunit alpha-3 and beta-4 subunit gene promoters. The protein is Armadillo repeat-containing X-linked protein 3 (ARMCX3) of Homo sapiens (Human).